We begin with the raw amino-acid sequence, 213 residues long: Bcl-2-related ovarian killer protein (213 aa).

A Phosphoserine modification is found at Ser7. Residues 15 to 45 (MDAFDRSPTDKELVAQAKALGREYVHARLLR) form an interactions with ITPR1 region. Glycyl lysine isopeptide (Lys-Gly) (interchain with G-Cter in ubiquitin) cross-links involve residues Lys25 and Lys32. The BH4 signature appears at 32 to 44 (KALGREYVHARLL). The BH3 signature appears at 67–83 (VCTVLLRLGDELEQIRP). Positions 71-79 (LLRLGDELE) are nuclear export signal. Positions 113–132 (HIFSAGITWGKVVSLYSVAA) match the BH1 motif. Residues Lys160 and Lys177 each participate in a glycyl lysine isopeptide (Lys-Gly) (interchain with G-Cter in ubiquitin) cross-link. The short motif at 165–179 (WLRRRGGWTDVLKCV) is the BH2 element. A helical membrane pass occupies residues 190-210 (WLVATLCSFGRFLKAAFFLLL).

The protein belongs to the Bcl-2 family. Monomer; positively regulates apoptotic process. Homodimer. Heterodimer. Oligomer; promoted by apoptotic stimuli and BH3-only proteins; mediates constitutive activation. Interacts (via BH4 domain) with ITPR1; enhances BOK expression and stabilization; limits apoptosis and prevents ubiquitination and then degradation; protects ITPR1 from proteolysis by CASP3 during apoptosis. Interacts with ITPR2 and ITPR3; binds most strongly to ITPR2, and barely to ITPR3; regulates their expression. Interacts with XPO1; translocates to the cytoplasm. Interacts with BNIP3; promotes oligomerization. Ubiquitinated by AMFR/gp78 E3 ubiquitin ligase complex; mediates degradation by ubiquitin-proteasome pathway in a VCP/p97-dependent manner; prevents from proapoptotic activity; promotes degradation of newly synthesized proteins that are not ITPR1 associated. As to expression, widely expressed. Highly expressed in brain, kidney, and spleen.

It localises to the mitochondrion membrane. It is found in the endoplasmic reticulum membrane. The protein localises to the mitochondrion inner membrane. Its subcellular location is the cytoplasm. The protein resides in the nucleus. It localises to the mitochondrion. It is found in the endoplasmic reticulum. The protein localises to the mitochondrion outer membrane. Its subcellular location is the early endosome membrane. The protein resides in the recycling endosome membrane. It localises to the nucleus outer membrane. It is found in the golgi apparatus. The protein localises to the cis-Golgi network membrane. Its subcellular location is the trans-Golgi network membrane. The protein resides in the membrane. In terms of biological role, apoptosis regulator that functions through different apoptotic signaling pathways. Plays a roles as pro-apoptotic protein that positively regulates intrinsic apoptotic process in a BAX- and BAK1-dependent manner or in a BAX- and BAK1-independent manner. In response to endoplasmic reticulum stress promotes mitochondrial apoptosis through downstream BAX/BAK1 activation and positive regulation of PERK-mediated unfolded protein response. Activates apoptosis independently of heterodimerization with survival-promoting BCL2 and BCL2L1 through induction of mitochondrial outer membrane permeabilization, in a BAX- and BAK1-independent manner, in response to inhibition of ERAD-proteasome degradation system, resulting in cytochrome c release. In response to DNA damage, mediates intrinsic apoptotic process in a TP53-dependent manner. Plays a role in granulosa cell apoptosis by CASP3 activation. Plays a roles as anti-apoptotic protein during neuronal apoptotic process, by negatively regulating poly ADP-ribose polymerase-dependent cell death through regulation of neuronal calcium homeostasis and mitochondrial bioenergetics in response to NMDA excitation. In addition to its role in apoptosis, may regulate trophoblast cell proliferation during the early stages of placental development, by acting on G1/S transition through regulation of CCNE1 expression. May also play a role as an inducer of autophagy by disrupting interaction between MCL1 and BECN1. The chain is Bcl-2-related ovarian killer protein from Mus musculus (Mouse).